The following is a 301-amino-acid chain: Probable alpha-L-glutamate ligase 1 (301 aa).

Positions 104–287 constitute an ATP-grasp domain; that stretch reads LQLLSRKGIG…VTEPIVEYIE (184 aa). Residues K141, 178-179, D187, and 211-213 contribute to the ATP site; these read EY and RSN. Residues D248, E260, and N262 each coordinate Mg(2+). Mn(2+) contacts are provided by D248, E260, and N262.

It belongs to the RimK family. Mg(2+) is required as a cofactor. The cofactor is Mn(2+).

The polypeptide is Probable alpha-L-glutamate ligase 1 (Shewanella oneidensis (strain ATCC 700550 / JCM 31522 / CIP 106686 / LMG 19005 / NCIMB 14063 / MR-1)).